The following is a 386-amino-acid chain: Alanine racemase (386 aa).

Residue lysine 38 is the Proton acceptor; specific for D-alanine of the active site. An N6-(pyridoxal phosphate)lysine modification is found at lysine 38. A substrate-binding site is contributed by arginine 136. Tyrosine 267 (proton acceptor; specific for L-alanine) is an active-site residue. Substrate is bound at residue methionine 315.

This sequence belongs to the alanine racemase family. The cofactor is pyridoxal 5'-phosphate.

The enzyme catalyses L-alanine = D-alanine. Its pathway is amino-acid biosynthesis; D-alanine biosynthesis; D-alanine from L-alanine: step 1/1. Catalyzes the interconversion of L-alanine and D-alanine. May also act on other amino acids. The protein is Alanine racemase (alr) of Clostridium perfringens (strain SM101 / Type A).